Reading from the N-terminus, the 450-residue chain is Phosphoglucosamine mutase 2 (450 aa).

The Phosphoserine intermediate role is filled by Ser-101. Residues Ser-101, Asp-245, Asp-247, and Asp-249 each coordinate Mg(2+). Ser-101 bears the Phosphoserine mark.

The protein belongs to the phosphohexose mutase family. It depends on Mg(2+) as a cofactor. In terms of processing, activated by phosphorylation.

The enzyme catalyses alpha-D-glucosamine 1-phosphate = D-glucosamine 6-phosphate. Its function is as follows. Catalyzes the conversion of glucosamine-6-phosphate to glucosamine-1-phosphate. This chain is Phosphoglucosamine mutase 2, found in Shewanella baltica (strain OS185).